A 141-amino-acid chain; its full sequence is Putative ankyrin repeat protein FPV223 (141 aa).

ANK repeat units follow at residues 21–50, 54–83, 85–114, and 118–140; these read SGRT…DVFK, CMCT…YIVK, RNKL…NENS, and DGLT…MFVI.

The polypeptide is Putative ankyrin repeat protein FPV223 (Vertebrata (FPV)).